Here is a 267-residue protein sequence, read N- to C-terminus: Tryptophan synthase alpha chain (267 aa).

Residues Glu-49 and Asp-60 each act as proton acceptor in the active site.

This sequence belongs to the TrpA family. In terms of assembly, tetramer of two alpha and two beta chains.

The catalysed reaction is (1S,2R)-1-C-(indol-3-yl)glycerol 3-phosphate + L-serine = D-glyceraldehyde 3-phosphate + L-tryptophan + H2O. The protein operates within amino-acid biosynthesis; L-tryptophan biosynthesis; L-tryptophan from chorismate: step 5/5. In terms of biological role, the alpha subunit is responsible for the aldol cleavage of indoleglycerol phosphate to indole and glyceraldehyde 3-phosphate. The polypeptide is Tryptophan synthase alpha chain (Pelobacter propionicus (strain DSM 2379 / NBRC 103807 / OttBd1)).